The following is a 298-amino-acid chain: Probable endonuclease 4 (298 aa).

Zn(2+) is bound by residues H69, H111, E146, D180, H183, H215, D228, H230, and E260.

This sequence belongs to the AP endonuclease 2 family. Zn(2+) serves as cofactor.

The catalysed reaction is Endonucleolytic cleavage to 5'-phosphooligonucleotide end-products.. In terms of biological role, endonuclease IV plays a role in DNA repair. It cleaves phosphodiester bonds at apurinic or apyrimidinic (AP) sites, generating a 3'-hydroxyl group and a 5'-terminal sugar phosphate. In Bacillus cereus (strain AH187), this protein is Probable endonuclease 4.